The following is a 571-amino-acid chain: Proline--tRNA ligase (571 aa).

It belongs to the class-II aminoacyl-tRNA synthetase family. ProS type 1 subfamily. In terms of assembly, homodimer.

It localises to the cytoplasm. It carries out the reaction tRNA(Pro) + L-proline + ATP = L-prolyl-tRNA(Pro) + AMP + diphosphate. In terms of biological role, catalyzes the attachment of proline to tRNA(Pro) in a two-step reaction: proline is first activated by ATP to form Pro-AMP and then transferred to the acceptor end of tRNA(Pro). As ProRS can inadvertently accommodate and process non-cognate amino acids such as alanine and cysteine, to avoid such errors it has two additional distinct editing activities against alanine. One activity is designated as 'pretransfer' editing and involves the tRNA(Pro)-independent hydrolysis of activated Ala-AMP. The other activity is designated 'posttransfer' editing and involves deacylation of mischarged Ala-tRNA(Pro). The misacylated Cys-tRNA(Pro) is not edited by ProRS. This Glaesserella parasuis serovar 5 (strain SH0165) (Haemophilus parasuis) protein is Proline--tRNA ligase.